The primary structure comprises 677 residues: Methionine--tRNA ligase (677 aa).

Residues 15–25 (PYANGSIHLGH) carry the 'HIGH' region motif. Residues Cys-146, Cys-149, Cys-159, and Cys-162 each coordinate Zn(2+). A 'KMSKS' region motif is present at residues 333–337 (KMSKS). Residue Lys-336 coordinates ATP. Residues 575-677 (DFAKVDLRVA…AGAKPGHQVK (103 aa)) form the tRNA-binding domain.

The protein belongs to the class-I aminoacyl-tRNA synthetase family. MetG type 1 subfamily. Homodimer. Zn(2+) serves as cofactor.

It localises to the cytoplasm. The enzyme catalyses tRNA(Met) + L-methionine + ATP = L-methionyl-tRNA(Met) + AMP + diphosphate. Its function is as follows. Is required not only for elongation of protein synthesis but also for the initiation of all mRNA translation through initiator tRNA(fMet) aminoacylation. The protein is Methionine--tRNA ligase of Escherichia coli O127:H6 (strain E2348/69 / EPEC).